The chain runs to 663 residues: Leishmanolysin-like peptidase (663 aa).

Residue His-246 participates in Zn(2+) binding. The active site involves Glu-247. Zn(2+) contacts are provided by His-250 and His-353.

The protein belongs to the peptidase M8 family. Zn(2+) serves as cofactor.

The protein resides in the cytoplasm. In terms of biological role, essential for the coordination of mitotic progression, and also plays a role in cell migration. This Caenorhabditis elegans protein is Leishmanolysin-like peptidase.